The primary structure comprises 335 residues: 2,4-dienoyl-CoA reductase [(3E)-enoyl-CoA-producing], mitochondrial (335 aa).

A mitochondrion-targeting transit peptide spans 1 to 34; the sequence is MKLPARVFFTLGSRLPCGLAPRRFFSYGTKILYQ. 2 positions are modified to N6-acetyllysine; alternate: lysine 42 and lysine 49. An N6-succinyllysine; alternate mark is found at lysine 42 and lysine 49. 66 to 71 lines the NADP(+) pocket; sequence GGGTGL. Threonine 69 carries the post-translational modification Phosphothreonine. Lysine 73 is subject to N6-succinyllysine. Arginine 91 contacts NADP(+). Residue arginine 91 coordinates substrate. N6-acetyllysine; alternate is present on lysine 97. The residue at position 97 (lysine 97) is an N6-succinyllysine; alternate. Aspartate 117 contributes to the NADP(+) binding site. Arginine 119, phenylalanine 149, and serine 157 together coordinate substrate. Residue tyrosine 199 is the Proton acceptor of the active site. Lysine 214 serves as a coordination point for NADP(+). Lysine 230 is modified (N6-acetyllysine). An NADP(+)-binding site is contributed by 240-243; that stretch reads PGPI. Residue lysine 244 is modified to N6-acetyllysine; alternate. Position 244 is an N6-succinyllysine; alternate (lysine 244). Residue arginine 251 participates in substrate binding. Residues lysine 260 and lysine 319 each carry the N6-acetyllysine; alternate modification. N6-succinyllysine; alternate occurs at positions 260 and 319.

It belongs to the short-chain dehydrogenases/reductases (SDR) family. 2,4-dienoyl-CoA reductase subfamily. In terms of assembly, homotetramer. Heart = liver = pancreas &gt; kidney &gt;&gt; skeletal muscle = lung.

The protein localises to the mitochondrion. It carries out the reaction a (2E,4E)-dienoyl-CoA + NADPH + H(+) = a 4,5-saturated-(3E)-enoyl-CoA + NADP(+). The enzyme catalyses a (2E,4Z)-dienoyl-CoA + NADPH + H(+) = a 4,5-saturated-(3E)-enoyl-CoA + NADP(+). The catalysed reaction is (2E,4E)-hexadienoyl-CoA + NADPH + H(+) = (3E)-hexenoyl-CoA + NADP(+). Functionally, auxiliary enzyme of beta-oxidation. It participates in the metabolism of unsaturated fatty enoyl-CoA esters having double bonds in both even- and odd-numbered positions in mitochondria. Catalyzes the NADP-dependent reduction of 2,4-dienoyl-CoA to yield trans-3-enoyl-CoA. This chain is 2,4-dienoyl-CoA reductase [(3E)-enoyl-CoA-producing], mitochondrial (DECR1), found in Homo sapiens (Human).